Consider the following 489-residue polypeptide: Glutamate--tRNA ligase (489 aa).

The 'HIGH' region signature appears at 11–21 (PSPTGHLHIGN). The 'KMSKS' region signature appears at 252-256 (KLSKR). Position 255 (lysine 255) interacts with ATP.

Belongs to the class-I aminoacyl-tRNA synthetase family. Glutamate--tRNA ligase type 1 subfamily. Monomer.

It is found in the cytoplasm. The enzyme catalyses tRNA(Glu) + L-glutamate + ATP = L-glutamyl-tRNA(Glu) + AMP + diphosphate. In terms of biological role, catalyzes the attachment of glutamate to tRNA(Glu) in a two-step reaction: glutamate is first activated by ATP to form Glu-AMP and then transferred to the acceptor end of tRNA(Glu). In Oceanobacillus iheyensis (strain DSM 14371 / CIP 107618 / JCM 11309 / KCTC 3954 / HTE831), this protein is Glutamate--tRNA ligase.